Reading from the N-terminus, the 597-residue chain is Gigaxonin (597 aa).

One can recognise a BTB domain in the interval Cys30 to Glu99. In terms of domain architecture, BACK spans Cys134 to Leu236. Kelch repeat units follow at residues Cys274 to Gly326, Phe327 to Gly374, Leu376 to Lys421, Lys422 to Met468, Leu470 to Ala522, and Ser528 to Arg574.

As to quaternary structure, interacts with TBCB. Interacts with CUL3. Part of a complex that contains CUL3, RBX1 and GAN. Interacts (via BTB domain) with UBA1. Interacts (via Kelch domains) with MAP1B (via C-terminus) and MAP1S (via C-terminus). Post-translationally, ubiquitinated by E3 ubiquitin ligase complex formed by CUL3 and RBX1 and probably targeted for proteasome-independent degradation. As to expression, expressed in brain, heart and muscle.

The protein resides in the cytoplasm. The protein localises to the cytoskeleton. Its pathway is protein modification; protein ubiquitination. Probable cytoskeletal component that directly or indirectly plays an important role in neurofilament architecture. May act as a substrate-specific adapter of an E3 ubiquitin-protein ligase complex which mediates the ubiquitination and subsequent proteasomal degradation of target proteins. Controls degradation of TBCB. Controls degradation of MAP1B and MAP1S, and is critical for neuronal maintenance and survival. The protein is Gigaxonin (GAN) of Homo sapiens (Human).